A 239-amino-acid polypeptide reads, in one-letter code: Purine nucleoside phosphorylase DeoD-type (239 aa).

His5 serves as a coordination point for a purine D-ribonucleoside. Phosphate contacts are provided by residues Gly21, Arg25, Arg44, and Arg88–Ser91. A purine D-ribonucleoside-binding positions include Glu180–Glu182 and Ser204–Asp205. Asp205 acts as the Proton donor in catalysis.

This sequence belongs to the PNP/UDP phosphorylase family. In terms of assembly, homohexamer; trimer of homodimers.

The catalysed reaction is a purine D-ribonucleoside + phosphate = a purine nucleobase + alpha-D-ribose 1-phosphate. It catalyses the reaction a purine 2'-deoxy-D-ribonucleoside + phosphate = a purine nucleobase + 2-deoxy-alpha-D-ribose 1-phosphate. Functionally, catalyzes the reversible phosphorolytic breakdown of the N-glycosidic bond in the beta-(deoxy)ribonucleoside molecules, with the formation of the corresponding free purine bases and pentose-1-phosphate. This chain is Purine nucleoside phosphorylase DeoD-type, found in Myxococcus xanthus (strain DK1622).